The following is a 198-amino-acid chain: Na(+)-translocating NADH-quinone reductase subunit E (198 aa).

6 consecutive transmembrane segments (helical) span residues 11 to 31 (SIFI…FLAV), 39 to 59 (FGLG…NNLV), 77 to 97 (FLNF…LEMV), 110 to 130 (GIFL…SFMV), 140 to 160 (IVYG…LAGI), and 176 to 196 (LGIT…FSGV).

Belongs to the NqrDE/RnfAE family. In terms of assembly, composed of six subunits; NqrA, NqrB, NqrC, NqrD, NqrE and NqrF.

The protein resides in the cell inner membrane. It catalyses the reaction a ubiquinone + n Na(+)(in) + NADH + H(+) = a ubiquinol + n Na(+)(out) + NAD(+). Functionally, NQR complex catalyzes the reduction of ubiquinone-1 to ubiquinol by two successive reactions, coupled with the transport of Na(+) ions from the cytoplasm to the periplasm. NqrA to NqrE are probably involved in the second step, the conversion of ubisemiquinone to ubiquinol. In Aliivibrio salmonicida (strain LFI1238) (Vibrio salmonicida (strain LFI1238)), this protein is Na(+)-translocating NADH-quinone reductase subunit E.